The chain runs to 131 residues: Cytochrome c-552 (131 aa).

C11, C14, H15, and M69 together coordinate heme c.

In terms of processing, binds 1 heme c group covalently per subunit.

Its function is as follows. This monoheme basic protein appears to function as an electron donor to cytochrome oxidase in T.thermophilus. In Thermus thermophilus, this protein is Cytochrome c-552 (cycA).